Reading from the N-terminus, the 93-residue chain is Phosphoribosyl-ATP pyrophosphatase (93 aa).

It belongs to the PRA-PH family.

The protein localises to the cytoplasm. It carries out the reaction 1-(5-phospho-beta-D-ribosyl)-ATP + H2O = 1-(5-phospho-beta-D-ribosyl)-5'-AMP + diphosphate + H(+). It functions in the pathway amino-acid biosynthesis; L-histidine biosynthesis; L-histidine from 5-phospho-alpha-D-ribose 1-diphosphate: step 2/9. This is Phosphoribosyl-ATP pyrophosphatase from Corynebacterium aurimucosum (strain ATCC 700975 / DSM 44827 / CIP 107346 / CN-1) (Corynebacterium nigricans).